The sequence spans 341 residues: Acetylpolyamine amidohydrolase (341 aa).

His-157 functions as the Proton donor/acceptor in the catalytic mechanism. Residues Asp-192, His-194, and Asp-281 each contribute to the Zn(2+) site.

Belongs to the histone deacetylase family. As to quaternary structure, homodimer. The cofactor is Zn(2+).

It carries out the reaction N-acetylputrescine + H2O = putrescine + acetate. It catalyses the reaction N-acetylcadaverine + H2O = cadaverine + acetate. It functions in the pathway amine and polyamine metabolism. Its function is as follows. Involved in polyamine metabolism. Catalyzes the deacetylation of various acetylated polyamines such as N-acetylputrescine and N-acetylcadaverine. In Burkholderia pseudomallei (strain 1710b), this protein is Acetylpolyamine amidohydrolase.